A 468-amino-acid chain; its full sequence is tRNA modification GTPase MnmE (468 aa).

(6S)-5-formyl-5,6,7,8-tetrahydrofolate is bound by residues Arg-29, Glu-97, and Lys-136. Residues 232-390 (GFELAIVGRP…VVAHIVARME (159 aa)) form the TrmE-type G domain. Residue Asn-242 coordinates K(+). GTP-binding positions include 242-247 (NVGKSS), 261-267 (TDLAGTT), and 286-289 (DTAG). Ser-246 provides a ligand contact to Mg(2+). The K(+) site is built by Thr-261, Leu-263, and Thr-266. Thr-267 is a binding site for Mg(2+). Residue Lys-468 participates in (6S)-5-formyl-5,6,7,8-tetrahydrofolate binding.

This sequence belongs to the TRAFAC class TrmE-Era-EngA-EngB-Septin-like GTPase superfamily. TrmE GTPase family. As to quaternary structure, homodimer. Heterotetramer of two MnmE and two MnmG subunits. K(+) serves as cofactor.

Its subcellular location is the cytoplasm. Its function is as follows. Exhibits a very high intrinsic GTPase hydrolysis rate. Involved in the addition of a carboxymethylaminomethyl (cmnm) group at the wobble position (U34) of certain tRNAs, forming tRNA-cmnm(5)s(2)U34. The chain is tRNA modification GTPase MnmE from Magnetococcus marinus (strain ATCC BAA-1437 / JCM 17883 / MC-1).